The sequence spans 249 residues: 3-deoxy-D-manno-octulosonic acid kinase (249 aa).

The active site involves Asp-175.

This sequence belongs to the protein kinase superfamily. KdkA/RfaP family.

The protein localises to the cell inner membrane. It carries out the reaction an alpha-Kdo-(2-&gt;6)-lipid IVA + ATP = a 4-O-phospho-alpha-Kdo-(2-&gt;6)-lipid IVA + ADP + H(+). It participates in bacterial outer membrane biogenesis; LPS core biosynthesis. Catalyzes the ATP-dependent phosphorylation of the 3-deoxy-D-manno-octulosonic acid (Kdo) residue in Kdo-lipid IV(A) at the 4-OH position. The chain is 3-deoxy-D-manno-octulosonic acid kinase from Xanthomonas oryzae pv. oryzae (strain PXO99A).